The primary structure comprises 319 residues: Cytochrome c biogenesis protein CcsA (319 aa).

Helical transmembrane passes span 14 to 34 (AFAVLFLTMLLYWCGAAFPQW), 46 to 66 (AIANLCITGLLAARWIEGGYF), 74 to 94 (SLFFLCWGLTAMHFVAESISG), 97 to 117 (LVGVVTAPVAMGITAFAALSL), and 142 to 162 (VMMLSYATLMVGSLLAIALLV). Positions 175-201 (SVGTGSFRSRRPEPSLEASTGNGGTTV) are disordered. Polar residues predominate over residues 191-201 (EASTGNGGTTV). Transmembrane regions (helical) follow at residues 227–247 (MIGLGFPLLTIGIISGAVWAN), 254–274 (WSWDPKETWALIVWLVYAAYL), and 288–308 (AILATVGFGVVWVCYLGVNLL).

It belongs to the CcmF/CycK/Ccl1/NrfE/CcsA family. In terms of assembly, may interact with ccs1.

Its subcellular location is the cellular thylakoid membrane. Required during biogenesis of c-type cytochromes (cytochrome c6 and cytochrome f) at the step of heme attachment. The sequence is that of Cytochrome c biogenesis protein CcsA from Thermosynechococcus vestitus (strain NIES-2133 / IAM M-273 / BP-1).